A 117-amino-acid polypeptide reads, in one-letter code: MAGLVKLSCLVLACMIVAGPIATNAALSCGTVSGNLAACIGYLTQNGPLPRGCCTGVTNLNNMARTTPDRQQACRCLVGAANAFPTLNAARAAGLPKACGVNIPYKISKSTNCNSVR.

A signal peptide spans 1 to 25; it reads MAGLVKLSCLVLACMIVAGPIATNA. 4 disulfides stabilise this stretch: Cys29/Cys76, Cys39/Cys53, Cys54/Cys99, and Cys74/Cys113.

It belongs to the plant LTP family.

In terms of biological role, plant non-specific lipid-transfer proteins transfer phospholipids as well as galactolipids across membranes. May play a role in wax or cutin deposition in the cell walls of expanding epidermal cells and certain secretory tissues. The sequence is that of Non-specific lipid-transfer protein 1 (LTP1) from Brassica napus (Rape).